The primary structure comprises 525 residues: AarF domain-containing protein kinase 1 (525 aa).

Residues 148-477 (SFDDTPLGAA…HKKRDAGSFF (330 aa)) enclose the Protein kinase domain. ATP contacts are provided by residues 154–162 (LGAASLAQV) and lysine 176. Aspartate 308 serves as the catalytic Proton acceptor.

The protein belongs to the protein kinase superfamily. ADCK protein kinase family.

It localises to the mitochondrion. Appears to be essential for maintaining mitochondrial cristae formation and mitochondrial function by acting via YME1L1 in a kinase-independent manner to regulate essential mitochondrial structural proteins OPA1 and IMMT. The action of this enzyme is not yet clear. It is not known if it has protein kinase activity and what type of substrate it would phosphorylate (Ser, Thr or Tyr). This Mus musculus (Mouse) protein is AarF domain-containing protein kinase 1 (Adck1).